Consider the following 198-residue polypeptide: MQFEVKDLINKIKKDGLEEAEKLANEIILNAKRDAEAIVLKAESDAKDLKMQAEAEANEYKRYSLEASRQAVRDLIIGTEKNIKSLFKTALKDSVSRVYDDNFLRDLIIKVVDIWSKNDKIDIMLNESDFSNLLSVLRAKIGNRLDDAIEIKPFKGISKGFTIQQRDGNLYYDFTSETVADILFEYLNPRFKEVIKLI.

This sequence belongs to the V-ATPase E subunit family.

Its function is as follows. Produces ATP from ADP in the presence of a proton gradient across the membrane. The sequence is that of V-type proton ATPase subunit E from Borrelia turicatae (strain 91E135).